The chain runs to 78 residues: Translational regulator CsrA (78 aa).

This sequence belongs to the CsrA/RsmA family. Homodimer; the beta-strands of each monomer intercalate to form a hydrophobic core, while the alpha-helices form wings that extend away from the core.

The protein resides in the cytoplasm. A translational regulator that binds mRNA to regulate translation initiation and/or mRNA stability. Usually binds in the 5'-UTR at or near the Shine-Dalgarno sequence preventing ribosome-binding, thus repressing translation. Its main target seems to be the major flagellin gene, while its function is anatagonized by FliW. The chain is Translational regulator CsrA from Borrelia recurrentis (strain A1).